The chain runs to 967 residues: Probable serine/threonine-protein kinase DDB_G0290621 (967 aa).

Disordered stretches follow at residues 65 to 122, 215 to 251, and 287 to 326; these read EDSD…KEKE, SSLS…SSSS, and QQQL…SPRT. Residues 66–94 show a composition bias toward acidic residues; that stretch reads DSDEDDDDEEDEEDEEDSDEEEDDDVVED. Residues 95–122 are compositionally biased toward basic and acidic residues; sequence DNTKDIGKSRDSDKSIKGKEKGKEKEKE. Residues 297–326 are compositionally biased toward low complexity; it reads QQQQQQQQQQQQQNNSMLQQSNNNNISPRT. Positions 345 to 610 constitute a Protein kinase domain; the sequence is FNDSNKIGEG…EIRSRLSEII (266 aa). Residues 351–359 and Lys-368 each bind ATP; that span reads IGEGGQCSI. The active-site Proton acceptor is Asp-467. Disordered regions lie at residues 634-667, 700-752, and 862-882; these read DDSL…NNNN, STSN…NNNI, and TSSS…NPSN. Positions 639 to 666 are enriched in low complexity; that stretch reads NNNNNNNQNNNNQNNNNNNNNNNNNNNN. The segment covering 863-882 has biased composition (low complexity); it reads SSSSNKNNNNNNNDNNNPSN.

The protein belongs to the protein kinase superfamily. TKL Ser/Thr protein kinase family.

It carries out the reaction L-seryl-[protein] + ATP = O-phospho-L-seryl-[protein] + ADP + H(+). The enzyme catalyses L-threonyl-[protein] + ATP = O-phospho-L-threonyl-[protein] + ADP + H(+). In Dictyostelium discoideum (Social amoeba), this protein is Probable serine/threonine-protein kinase DDB_G0290621.